Here is a 273-residue protein sequence, read N- to C-terminus: Hydroxynaphthalene reductase arp2 (273 aa).

The NADP(+) site is built by Ile24, Asp70, Asn97, and Arg130. Residues Ser146 and Ser147 each act as proton donor in the active site. Tyr160, Lys164, Val193, and Ser195 together coordinate NADP(+). Catalysis depends on Tyr160, which acts as the Proton acceptor. Lys164 acts as the Lowers pKa of active site Tyr in catalysis.

It belongs to the short-chain dehydrogenases/reductases (SDR) family.

It is found in the endosome. The protein operates within pigment biosynthesis; melanin biosynthesis. Its activity is regulated as follows. Tricyclazole and pyroquilon inhibit arp2 hydroxynaphtalene reductase activity. Its function is as follows. Hydroxynaphthalene reductase; part of the gene cluster that mediates the biosynthesis of dihydroxynaphthalene (DHN)-melanin, a bluish-green pigment and a structural component of the conidial wall. The first step of the pathway is the production of the heptaketide naphtopyrone YWA1 by the polyketide synthase alb1 though condensation of acetyl-CoA with malonyl-CoA. The naphtopyrone YWA1 is then converted to the pentaketide 1,3,6,8-tetrahydroxynaphthalene (1,3,6,8-THN) by the heptaketide hydrolyase ayg1 though chain-length shortening. 1,3,6,8-THN is substrate of the hydroxynaphthalene reductase arp2 to yield scytalone. The scytalone dehydratase arp1 then reduces scytalone to 1,3,8-THN. 1,3,8-THN is also substrate of the hydroxynaphthalene reductase arp2 to yield vermelone. Vermelone is further converted by the multicopper oxidase abr1 to 1,8-DHN. Finally the laccase abr2 transforms 1,8-DHN to DHN-melanin. DHN-melanin biosynthesis appears to be initiated in endosomes where early enzymes (abl1, ayg1, arp1 and arp2) localize, with exocytosis leading to melanin deposition on the cell surface where late enzymes (abr1 and abr2) localize. DHN-melanin is an important structural component of the outer cell wall and is required for the presence of conidial surface hydrophobins. DHN-melanin also plays a crucial role in fungal virulence, including a protective role against the host's immune defenses. DHN-melanin also protects conidia against amoeba predation. This Aspergillus fumigatus (strain ATCC MYA-4609 / CBS 101355 / FGSC A1100 / Af293) (Neosartorya fumigata) protein is Hydroxynaphthalene reductase arp2.